Reading from the N-terminus, the 320-residue chain is Polynucleotide 5'-triphosphatase CTL1 (320 aa).

The span at 1-12 (MSDQPETPSNSR) shows a compositional bias: polar residues. The interval 1–23 (MSDQPETPSNSRNSHENVGAKKA) is disordered. Residues 13–23 (NSHENVGAKKA) show a composition bias toward basic and acidic residues.

This sequence belongs to the fungal TPase family. The cofactor is Mg(2+). Mn(2+) is required as a cofactor.

It is found in the cytoplasm. It localises to the nucleus. The enzyme catalyses a 5'-end triphospho-ribonucleoside in mRNA + H2O = a 5'-end diphospho-ribonucleoside in mRNA + phosphate + H(+). Probably involved in an RNA processing event other than mRNA capping. Releases gamma-phosphate from the 5'-end of RNA to produce a diphosphate terminus. The polypeptide is Polynucleotide 5'-triphosphatase CTL1 (Saccharomyces cerevisiae (strain ATCC 204508 / S288c) (Baker's yeast)).